Here is a 358-residue protein sequence, read N- to C-terminus: Peptide chain release factor 1 (358 aa).

Glutamine 233 is modified (N5-methylglutamine). The disordered stretch occupies residues 286 to 309 (AELASARKSQVGTGDRSERIRTYN).

The protein belongs to the prokaryotic/mitochondrial release factor family. In terms of processing, methylated by PrmC. Methylation increases the termination efficiency of RF1.

The protein localises to the cytoplasm. Its function is as follows. Peptide chain release factor 1 directs the termination of translation in response to the peptide chain termination codons UAG and UAA. In Carboxydothermus hydrogenoformans (strain ATCC BAA-161 / DSM 6008 / Z-2901), this protein is Peptide chain release factor 1.